A 1853-amino-acid polypeptide reads, in one-letter code: Cellulosomal-scaffolding protein A (1853 aa).

Positions 1 to 28 (MRKVISMLLVVAMLTTIFAAMIPQTVSA) are cleaved as a signal peptide. Cohesin domains are found at residues 29-182 (ATMT…VPSD) and 183-322 (GVVV…VNVG). 2 linker (Pro/Thr-rich) regions span residues 323–363 (NATP…PANT) and 523–559 (GGSV…SDDP). Residues 323 to 364 (NATPTKGATPTNTATPTKSATATPTRPSVPTNTPTNTPANTP) show a composition bias toward low complexity. Disordered regions lie at residues 323-367 (NATP…PVSG) and 525-559 (SVVP…SDDP). Residues 365–523 (VSGNLKVEFY…GVLVWGKEPG (159 aa)) enclose the CBM3 domain. A compositionally biased stretch (low complexity) spans 525–555 (SVVPSTQPVTTPPATTKPPATTKPPATTIPP). 7 Cohesin domains span residues 560–704 (NAIK…NVGD), 724–866 (AVRI…VNVG), 889–1031 (AVRI…VNVG), 1054–1196 (AVRI…VNVG), 1219–1361 (AVRI…VNVG), 1384–1526 (AVRI…VNVG), and 1548–1690 (KLTL…VLVT). Residues 1785-1852 (IMMWVGDIVK…FGATSSDYDA (68 aa)) enclose the Dockerin domain.

Post-translationally, O-glycosylated on most but not all Thr residues of the linker units. The reducing sugar is galactopyranose.

Its subcellular location is the secreted. In terms of biological role, acts as a scaffolding protein in the cellulosome. It promotes binding of cellulose to the catalytic domains of the cellulolytic enzymes. This Acetivibrio thermocellus (strain ATCC 27405 / DSM 1237 / JCM 9322 / NBRC 103400 / NCIMB 10682 / NRRL B-4536 / VPI 7372) (Clostridium thermocellum) protein is Cellulosomal-scaffolding protein A (cipA).